The primary structure comprises 68 residues: Coiled-coil domain-containing protein 179 (68 aa).

Residues 11 to 68 (SQVNPEGPRQHHPSEVTERQLANKRIQNMQHLKKEKRRLNKRFSRPSPIPEPGLLWSS) form a disordered region. Over residues 18-28 (PRQHHPSEVTE) the composition is skewed to basic and acidic residues. Residues 27 to 53 (TERQLANKRIQNMQHLKKEKRRLNKRF) are a coiled coil. Residues 41-54 (HLKKEKRRLNKRFS) are compositionally biased toward basic residues.

The protein is Coiled-coil domain-containing protein 179 (CCDC179) of Homo sapiens (Human).